The following is a 101-amino-acid chain: Cilia- and flagella-associated protein 141 (101 aa).

In terms of assembly, microtubule inner protein component of sperm flagellar doublet microtubules. Expressed in trachea multiciliated cells.

It is found in the cytoplasm. The protein resides in the cytoskeleton. The protein localises to the cilium axoneme. Its subcellular location is the flagellum axoneme. Functionally, microtubule inner protein (MIP) part of the dynein-decorated doublet microtubules (DMTs) in cilia axoneme, which is required for motile cilia beating. In Bos taurus (Bovine), this protein is Cilia- and flagella-associated protein 141.